The chain runs to 789 residues: Homocitrate dehydratase, mitochondrial (789 aa).

Residues 1 to 14 constitute a mitochondrion transit peptide; that stretch reads MLSSANRFYIKRHL. Residues Q96 and 189–191 contribute to the substrate site; that span reads DSH. Positions 385, 448, and 451 each coordinate [4Fe-4S] cluster. Substrate-binding positions include R476, R481, K610, and 672–673; that span reads AR.

Belongs to the aconitase/IPM isomerase family. It depends on [4Fe-4S] cluster as a cofactor.

Its subcellular location is the mitochondrion. The enzyme catalyses (2R)-homocitrate = cis-homoaconitate + H2O. Its pathway is amino-acid biosynthesis; L-lysine biosynthesis via AAA pathway; L-alpha-aminoadipate from 2-oxoglutarate: step 2/5. In terms of biological role, catalyzes the reversible dehydration of (R)-homocitrate to cis-homoaconitate, a step in the alpha-aminoadipate pathway for lysine biosynthesis. This is Homocitrate dehydratase, mitochondrial (ACO2) from Saccharomyces cerevisiae (strain ATCC 204508 / S288c) (Baker's yeast).